The primary structure comprises 265 residues: 1-(5-phosphoribosyl)-5-[(5-phosphoribosylamino)methylideneamino] imidazole-4-carboxamide isomerase (265 aa).

Catalysis depends on Asp-8, which acts as the Proton acceptor. Asp-139 (proton donor) is an active-site residue.

Belongs to the HisA/HisF family.

Its subcellular location is the cytoplasm. The enzyme catalyses 1-(5-phospho-beta-D-ribosyl)-5-[(5-phospho-beta-D-ribosylamino)methylideneamino]imidazole-4-carboxamide = 5-[(5-phospho-1-deoxy-D-ribulos-1-ylimino)methylamino]-1-(5-phospho-beta-D-ribosyl)imidazole-4-carboxamide. It functions in the pathway amino-acid biosynthesis; L-histidine biosynthesis; L-histidine from 5-phospho-alpha-D-ribose 1-diphosphate: step 4/9. The chain is 1-(5-phosphoribosyl)-5-[(5-phosphoribosylamino)methylideneamino] imidazole-4-carboxamide isomerase from Herminiimonas arsenicoxydans.